A 161-amino-acid chain; its full sequence is Transcriptional repressor NrdR (161 aa).

Residues 3–34 (CPYCGARDARVIDSRELNGGESIRRRRECIAC) fold into a zinc finger. The ATP-cone domain occupies 49-139 (LMVVKRDGRR…VYRRFADLED (91 aa)).

It belongs to the NrdR family. Zn(2+) serves as cofactor.

In terms of biological role, negatively regulates transcription of bacterial ribonucleotide reductase nrd genes and operons by binding to NrdR-boxes. This chain is Transcriptional repressor NrdR, found in Thermomicrobium roseum (strain ATCC 27502 / DSM 5159 / P-2).